We begin with the raw amino-acid sequence, 1365 residues long: Nuclear pore complex protein Nup154 (1365 aa).

The required for binding to Nup93-1 and anchoring to the nuclear pore complex stretch occupies residues 1 to 508 (MTLPQAQLDF…GTHIIEVLKM (508 aa)). Residues 508–986 (MVDVLRQILL…KSINPLKGTA (479 aa)) are required for binding to chromatin.

This sequence belongs to the non-repetitive/WGA-negative nucleoporin family. Interacts (via N-terminus) with Nup93-1. Interacts with Nup35. Interacts with cup.

It is found in the nucleus. The protein localises to the nuclear pore complex. Its subcellular location is the chromosome. The protein resides in the nucleus membrane. It localises to the cytoplasm. In terms of biological role, component of the nuclear pore complex. Has a role in the organization of the inner nuclear membrane proteins at the nuclear envelope. In germ cells, plays a role in the nuclear localization of components of the dpp signaling pathways, such as Medea and phosphorylated Mad. Binds to chromatin, and together with Nup62 and Nup93-1, contributes to karyosome morphology and chromatin organization including attachment to the nuclear envelope in oocytes and nurse cells. Has a role in female fertility including egg chamber development; in nurse cells, has a role in the organization of F-actin in subcortical and cytoplasmic actin filaments important for the transfer of cytoplasm from nurse cells to the growing oocytes. Has a role in male spermatogenesis and fertility. Has a role in germ line cell proliferation. This Drosophila melanogaster (Fruit fly) protein is Nuclear pore complex protein Nup154.